Consider the following 413-residue polypeptide: Ribulose bisphosphate carboxylase/oxygenase activase, chloroplastic (413 aa).

The transit peptide at 1-54 directs the protein to the chloroplast; that stretch reads MAATVSTIGAVNRTTLNNSNYGGLVPNSAFLGSRLKVSSRFTTSKMVTGNFKIV. Residue 162 to 169 coordinates ATP; the sequence is GGKGQGKS.

This sequence belongs to the RuBisCO activase family.

The protein resides in the plastid. It localises to the chloroplast stroma. Its function is as follows. Activation of RuBisCO (ribulose-1,5-bisphosphate carboxylase/oxygenase; EC 4.1.1.39) involves the ATP-dependent carboxylation of the epsilon-amino group of lysine leading to a carbamate structure. This is Ribulose bisphosphate carboxylase/oxygenase activase, chloroplastic from Cucumis sativus (Cucumber).